A 288-amino-acid polypeptide reads, in one-letter code: Elongation factor Ts (288 aa).

The tract at residues 82 to 85 is involved in Mg(2+) ion dislocation from EF-Tu; the sequence is TDFV.

Belongs to the EF-Ts family.

The protein localises to the cytoplasm. Associates with the EF-Tu.GDP complex and induces the exchange of GDP to GTP. It remains bound to the aminoacyl-tRNA.EF-Tu.GTP complex up to the GTP hydrolysis stage on the ribosome. This is Elongation factor Ts from Chlorobaculum parvum (strain DSM 263 / NCIMB 8327) (Chlorobium vibrioforme subsp. thiosulfatophilum).